Here is a 138-residue protein sequence, read N- to C-terminus: ATP synthase epsilon chain (138 aa).

This sequence belongs to the ATPase epsilon chain family. As to quaternary structure, F-type ATPases have 2 components, CF(1) - the catalytic core - and CF(0) - the membrane proton channel. CF(1) has five subunits: alpha(3), beta(3), gamma(1), delta(1), epsilon(1). CF(0) has three main subunits: a, b and c.

Its subcellular location is the cell inner membrane. In terms of biological role, produces ATP from ADP in the presence of a proton gradient across the membrane. This chain is ATP synthase epsilon chain, found in Idiomarina loihiensis (strain ATCC BAA-735 / DSM 15497 / L2-TR).